The primary structure comprises 81 residues: Sulfur carrier protein TusA (81 aa).

Residue C19 is the Cysteine persulfide intermediate of the active site.

It belongs to the sulfur carrier protein TusA family. Interacts with IscS.

It is found in the cytoplasm. The protein operates within tRNA modification. Functionally, sulfur carrier protein involved in sulfur trafficking in the cell. Part of a sulfur-relay system required for 2-thiolation during synthesis of 2-thiouridine of the modified wobble base 5-methylaminomethyl-2-thiouridine (mnm(5)s(2)U) in tRNA. Interacts with IscS and stimulates its cysteine desulfurase activity. Accepts an activated sulfur from IscS, which is then transferred to TusD, and thus determines the direction of sulfur flow from IscS to 2-thiouridine formation. Also appears to be involved in sulfur transfer for the biosynthesis of molybdopterin. This is Sulfur carrier protein TusA from Citrobacter koseri (strain ATCC BAA-895 / CDC 4225-83 / SGSC4696).